Reading from the N-terminus, the 89-residue chain is Signal recognition particle 19 kDa protein (89 aa).

It belongs to the SRP19 family. Part of the signal recognition particle protein translocation system, which is composed of SRP and FtsY. Archaeal SRP consists of a 7S RNA molecule of 300 nucleotides and two protein subunits: SRP54 and SRP19.

The protein localises to the cytoplasm. Functionally, involved in targeting and insertion of nascent membrane proteins into the cytoplasmic membrane. Binds directly to 7S RNA and mediates binding of the 54 kDa subunit of the SRP. This chain is Signal recognition particle 19 kDa protein, found in Methanococcus maripaludis (strain C5 / ATCC BAA-1333).